The primary structure comprises 494 residues: Probable cytosol aminopeptidase (494 aa).

2 residues coordinate Mn(2+): lysine 260 and aspartate 265. Lysine 272 is an active-site residue. The Mn(2+) site is built by aspartate 283, aspartate 342, and glutamate 344. Arginine 346 is an active-site residue.

Belongs to the peptidase M17 family. Mn(2+) is required as a cofactor.

It localises to the cytoplasm. The catalysed reaction is Release of an N-terminal amino acid, Xaa-|-Yaa-, in which Xaa is preferably Leu, but may be other amino acids including Pro although not Arg or Lys, and Yaa may be Pro. Amino acid amides and methyl esters are also readily hydrolyzed, but rates on arylamides are exceedingly low.. The enzyme catalyses Release of an N-terminal amino acid, preferentially leucine, but not glutamic or aspartic acids.. Its function is as follows. Presumably involved in the processing and regular turnover of intracellular proteins. Catalyzes the removal of unsubstituted N-terminal amino acids from various peptides. This chain is Probable cytosol aminopeptidase, found in Bacillus cereus (strain B4264).